A 360-amino-acid polypeptide reads, in one-letter code: Peptide chain release factor 1 (360 aa).

An N5-methylglutamine modification is found at Gln237.

This sequence belongs to the prokaryotic/mitochondrial release factor family. Methylated by PrmC. Methylation increases the termination efficiency of RF1.

Its subcellular location is the cytoplasm. In terms of biological role, peptide chain release factor 1 directs the termination of translation in response to the peptide chain termination codons UAG and UAA. This is Peptide chain release factor 1 from Pseudomonas syringae pv. tomato (strain ATCC BAA-871 / DC3000).